A 159-amino-acid chain; its full sequence is Ribosomal RNA large subunit methyltransferase H (159 aa).

Residues leucine 76, glycine 108, and 127–132 (FSKMTF) each bind S-adenosyl-L-methionine.

The protein belongs to the RNA methyltransferase RlmH family. As to quaternary structure, homodimer.

It is found in the cytoplasm. The enzyme catalyses pseudouridine(1915) in 23S rRNA + S-adenosyl-L-methionine = N(3)-methylpseudouridine(1915) in 23S rRNA + S-adenosyl-L-homocysteine + H(+). Functionally, specifically methylates the pseudouridine at position 1915 (m3Psi1915) in 23S rRNA. This is Ribosomal RNA large subunit methyltransferase H from Shouchella clausii (strain KSM-K16) (Alkalihalobacillus clausii).